We begin with the raw amino-acid sequence, 105 residues long: Multidrug resistance protein EbrA (105 aa).

A run of 4 helical transmembrane segments spans residues 2 to 22 (LVGY…AAML), 35 to 55 (ALVV…LNHI), 57 to 77 (LSLS…VIGV), and 84 to 104 (LNAK…LLNW).

Belongs to the drug/metabolite transporter (DMT) superfamily. Small multidrug resistance (SMR) (TC 2.A.7.1) family. EbrA/EbrB subfamily. The efflux pump is composed of EbrA and EbrB.

The protein resides in the cell membrane. Its function is as follows. Part of a multidrug efflux pump. Confers resistance to cationic lipophilic dyes such as ethidium bromide, acriflavine, pyronine Y and safranin O. The efflux is probably coupled to an influx of protons. This chain is Multidrug resistance protein EbrA (ebrA), found in Bacillus atrophaeus.